Consider the following 309-residue polypeptide: MEGINKTAKMQFFFRPFSPDPEVQMLIFVVFLMMYLTSLGGNATIAVIVQINHSLHTPMYFFLANLAVLEIFYTSSITPLALANLLSMGKTPVSITGCGTQMFFFVFLGGADCVLLVVMAYDQFIAICHPLRYRLIMSWSLCVELLVGSLVLGFLLSLPLTILIFHLPFCHNDEIYHFYCDMPAVMRLACADTRVHKTALYIISFIVLSIPLSLISISYVFIVVAILRIRSAEGRQQAYSTCSSHILVVLLQYGCTSFIYLSPSSSYSPEMGRVVSVAYTFITPILNPLIYSLRNKELKDALRKALRKF.

Residues 1 to 25 are Extracellular-facing; sequence MEGINKTAKMQFFFRPFSPDPEVQM. Asn5 carries an N-linked (GlcNAc...) asparagine glycan. A helical membrane pass occupies residues 26–46; sequence LIFVVFLMMYLTSLGGNATIA. Residues 47-54 are Cytoplasmic-facing; sequence VIVQINHS. Residues 55–75 form a helical membrane-spanning segment; that stretch reads LHTPMYFFLANLAVLEIFYTS. Topologically, residues 76 to 100 are extracellular; the sequence is SITPLALANLLSMGKTPVSITGCGT. Cys98 and Cys190 are joined by a disulfide. Residues 101 to 121 form a helical membrane-spanning segment; sequence QMFFFVFLGGADCVLLVVMAY. The Cytoplasmic portion of the chain corresponds to 122–140; the sequence is DQFIAICHPLRYRLIMSWS. A helical membrane pass occupies residues 141-161; the sequence is LCVELLVGSLVLGFLLSLPLT. The Extracellular segment spans residues 162–198; it reads ILIFHLPFCHNDEIYHFYCDMPAVMRLACADTRVHKT. A helical transmembrane segment spans residues 199–218; the sequence is ALYIISFIVLSIPLSLISIS. At 219–238 the chain is on the cytoplasmic side; it reads YVFIVVAILRIRSAEGRQQA. Residues 239 to 259 form a helical membrane-spanning segment; sequence YSTCSSHILVVLLQYGCTSFI. The Extracellular portion of the chain corresponds to 260–272; it reads YLSPSSSYSPEMG. Residues 273–293 form a helical membrane-spanning segment; that stretch reads RVVSVAYTFITPILNPLIYSL. At 294–309 the chain is on the cytoplasmic side; that stretch reads RNKELKDALRKALRKF.

It belongs to the G-protein coupled receptor 1 family.

The protein localises to the cell membrane. In terms of biological role, odorant receptor. This Homo sapiens (Human) protein is Olfactory receptor 10V1 (OR10V1).